Consider the following 445-residue polypeptide: F-box protein At5g10340 (445 aa).

Positions 64-112 constitute an F-box domain; the sequence is SMEELLPHDVIEYHIMVRLDVKTLLKFKSVSKQWMSTIQSPSFQERQLI.

In Arabidopsis thaliana (Mouse-ear cress), this protein is F-box protein At5g10340.